A 602-amino-acid polypeptide reads, in one-letter code: Myotubularin (602 aa).

Residues 1 to 16 (MATSSTPKYNSNSLEN) are compositionally biased toward polar residues. Residues 1–33 (MATSSTPKYNSNSLENSVRRSPGDGINHEQNDE) form a disordered region. A compositionally biased stretch (basic and acidic residues) spans 17 to 33 (SVRRSPGDGINHEQNDE). In terms of domain architecture, GRAM spans 28 to 96 (HEQNDEISRL…GVIARIEKMG (69 aa)). The 376-residue stretch at 162-537 (GWAVYDAMTE…RHLELWVNYY (376 aa)) folds into the Myotubularin phosphatase domain. A 1,2-diacyl-sn-glycero-3-phospho-(1D-myo-inositol-3,5-bisphosphate) contacts are provided by Asn287, Asn312, and Ile313. A 1,2-diacyl-sn-glycero-3-phospho-(1D-myo-inositol-3-phosphate)-binding residues include Asn287, Asn312, and Ile313. The active-site Phosphocysteine intermediate is the Cys374. A 1,2-diacyl-sn-glycero-3-phospho-(1D-myo-inositol-3,5-bisphosphate)-binding residues include Ser375, Asp376, Gly377, Trp378, Asp379, Arg380, Lys416, and Arg420. Positions 375, 376, 377, 378, 379, and 380 each coordinate a 1,2-diacyl-sn-glycero-3-phospho-(1D-myo-inositol-3-phosphate). Arg420 contributes to the a 1,2-diacyl-sn-glycero-3-phospho-(1D-myo-inositol-3-phosphate) binding site. The disordered stretch occupies residues 577-602 (NSPKINRSTTSPSSPSQMMPQVQTPF). Positions 584 to 602 (STTSPSSPSQMMPQVQTPF) are enriched in low complexity.

This sequence belongs to the protein-tyrosine phosphatase family. Non-receptor class myotubularin subfamily.

The protein localises to the cytoplasm. Its subcellular location is the cell membrane. The protein resides in the cell projection. It localises to the filopodium. It is found in the ruffle. The protein localises to the late endosome. Its subcellular location is the myofibril. The protein resides in the sarcomere. The catalysed reaction is a 1,2-diacyl-sn-glycero-3-phospho-(1D-myo-inositol-3-phosphate) + H2O = a 1,2-diacyl-sn-glycero-3-phospho-(1D-myo-inositol) + phosphate. The enzyme catalyses a 1,2-diacyl-sn-glycero-3-phospho-(1D-myo-inositol-3,5-bisphosphate) + H2O = a 1,2-diacyl-sn-glycero-3-phospho-(1D-myo-inositol-5-phosphate) + phosphate. It carries out the reaction 1,2-dioctanoyl-sn-glycero-3-phospho-(1-D-myo-inositol-3-phosphate) + H2O = 1,2-dioctanoyl-sn-glycero-3-phospho-(1D-myo-inositol) + phosphate. It catalyses the reaction 1,2-dioctanoyl-sn-glycero-3-phospho-(1D-myo-inositol-3,5-bisphosphate) + H2O = 1,2-dioctanoyl-sn-glycero-3-phospho-(1D-myo-inositol-5-phosphate) + phosphate. The catalysed reaction is 1,2-dihexadecanoyl-sn-glycero-3-phospho-(1D-myo-inositol-3,5-phosphate) + H2O = 1,2-dihexadecanoyl-sn-glycero-3-phospho-(1D-myo-inositol-5-phosphate) + phosphate. Lipid phosphatase which dephosphorylates phosphatidylinositol 3-monophosphate (PI3P) and phosphatidylinositol 3,5-bisphosphate (PI(3,5)P2). This chain is Myotubularin (mtm1), found in Xenopus laevis (African clawed frog).